The primary structure comprises 2475 residues: MGNRGSSTSSRPPPSSEANIYAKLQDHIQRQTRPFSGGGYFNGGGDKNPVQHIKDYHIDSVSSKAKLRIIEGIIRAIAKIGFKVDTKQPIEDILKDIKKQLPDPRAGSTFVKNAEKQETVCKMIADAINQEFIDLGQDKLIDTTEGAASICRQIVLYINSLTHGLRAEYLDVHGSIENTLENIKLLNDAIKQLHERMVTEVTKAAPNEEVINAVTMIEAVYRRLLNEQNLQINILTNFIDNILTPTQKELDKLQTDEVDIIKLLNDTNSVLGTKNFGKVLSYTLCNLGIAASVANKINKALQKVGLKVEQYLQSKNWAEFDKELDLKRFSGLVSAENIAEFEKAVNLLRQTFNERHKILENSCAKKGGDEEKTPLDRRIEAQRLDRKHILMEFLNKSTQAYNDFLENVKKIGIKLVKEIALTPNITRLRDALSRINDMGTIALDLSLIGFYTNAAAREERETFLTQFMLVKNVLEEQSKIDPNFKNLYDSCSRLLQIIDFYTDIVQKKYGGGEDCECTRVGGAALTVEELGLSKAARSQVDLNQAINTFMYYYYVAQIYSNLTHNKQEFQSYEENYATILGDAIAGRLMQLDTEKNARINSPAVDLARGHVGPNPGGAQEEDWKATVSAIELEYDVKRRFYRALEGLDLYLKNITKTFVNNIDSIQTVQQMLDGVRIIGRWFTEATGDTLAQVFESFPTSAGNDSNVFTDNAPAGHYYEKVAAEIQQGRSVGTLRPVRASQAKNIRDLIGRSLSNFQALKNIINAFARIGDMLGGEELRQMVPMSPLQIYKTLLEYIQHSALSVGLKNLNQSEIGGQRVALARTPEEAAQRVYLSTVRVNDALSTRWETEDVFFTFMLKSMAAKIFIVLGIYDMFERPEPVYKLIPTRMILGGADELEPEVIPEAAELYFRLPRLAEFYQKLFSFRDENVQISMLPELEGIFSGLIRIIFMRPIELINIGDYSETEIRQLIKEINVIYQHFNLEYGEQEATKKALIHFVNEINRRFGVITRTEWEKFQRIVQEARTMNDFGMMNQTNYSILPDEDGYTQSSQLLPSDRFISPSSQPTPKWRPALYNIDSVDVQTGMLQPNSQWDLVQKFRKQLSEMFEDPSLQQELGKVSYQELIRQAINELKKDHTDKIQIVSKLIQGSESLADTDVNKIFLFHETVITGLNLLSAIYVLLNNFRNNIKGLDLDTIQKSIIEWLRETQAANVNHANLIDWLGRKHGAISEIRNPGLVVKENDARLSRVYPDPTTNATAPQDQNLVTETLFAWIVPYVGIPAGGGVRAEQELAARYLVDNQRIMQLLLTNIFEMTSSFNKMVQVRFPETSTAQVHLDFTGLISLIDSLMADTKYFLNLLRPHIDKNIIQYYENRSNPGSFYWLEEHLIDKLIKPPTDAGGRPLPGGELGLEGVNQIINKTYTLLTKPYNVLQLQGGAQRRDAANIQINNNPQPSERFEQYGRVFSRLVFYDALENNSGLRVEQVVLGDFRLSNLIRTNNAQEENALSYWDNIALRTYANVNDAANNLRRYRLYGSDHGIQNNRSMMMVFNQLVASYIARFYDAPSGKIYLNLINAFANGNFSQAVMEMGYAHPDLARNNNAFGHRGDPTEQSVLLLSLGLILQRLIKDTNRQGLSQHLISTLTEIPIYLKENYRANLPLFNKMFNILISQGELLKQFIQYTNVQLARPNLMGLLGANNDSIIYYNNNNVPTTGLSVGQAALRGIGGVFRPNVTLMPLGDAQNNTSDIVRKRLVAVIDGIIRGSHTLADSAMEVLHELTDHPIYLETEEHFIQNYMSRYNKEPLMPFSLSLYYLRDLRIENNEVYDPLLYPNLESGSPEFKLLYGTRKLLGNDPVQLSDMPGVQLIMKNYNETVVAREQITPTRFEHFYTHAIQALRFIINIRSFKTVMMYNENTFGGVNLISENRDDKPIITAGIGMNAVYSLRKTLQDVISFVESSYQEEQINHIHKIVSPKGQTRTLGSNRERERIFNLFDMNIIPINVNALMRSIPLANIYNYDYSFEEIACLMYGISAEKVRSLDTTAPQPDVAEVLNIPNRPPINTREFMLKLLINPYVSVSITQYGNELLSKGNAGYMSRIFRGDNALNMGRPKFLSDQIFNKVLFGSLYPTQFDYDEAGPGLAAGIQRGRERWGHPMSIYINQALHEIVRTIRLAETVRGLRNVIDRNQIIGELNAFRTQLEDTRREVNNLIQTPEIQNNPTPEIIAAIQNWVQQYRGQITNLIDLIGNAGQANSMINLIQNITPQTAGAQLTALFNIRGLPAPPPRQPLQNDIEAMQWFMTIVINHPPILIAPFMLLVNNLKEFLNTLERYVYKTPRWLGPGTARIAQPPVGMAPGINMRHHTSYTENSVLTYITEQNREEGPWSIVKQVGVGIQKPTLVHIGKDRFDTRLIRNLIFITNIQRLLRLRLNLELSQFRNVLVSPDHIINPSITEYGFSITGPSETFSDKQYDSDIRIL.

Gly2 carries N-myristoyl glycine; by host lipidation. Positions 2184 to 2211 (RNQIIGELNAFRTQLEDTRREVNNLIQT) form a coiled coil.

The protein belongs to the asfivirus polyprotein pp220 family. Post-translationally, the polyprotein is not glycosylated. Specific enzymatic cleavages in vivo by the viral pS273R protease yield mature proteins.

Its subcellular location is the host cytoplasm. It localises to the host perinuclear region. The protein resides in the virion. The protein localises to the host nucleus. In terms of biological role, essential for the core assembly. Its myristoyl moiety may function as a membrane-anchoring signal to bind the developing core shell to the inner viral envelope. Functionally, the structural protein p34 is a component of the virus core shell. The structural protein p14 is a component of the virus core shell. Its function is as follows. The structural protein p37 is a component of the virus core shell. In terms of biological role, the structural protein p150 is a component of the virus core shell. This is Polyprotein pp220 from African swine fever virus (isolate Warthog/Namibia/Wart80/1980) (ASFV).